A 301-amino-acid polypeptide reads, in one-letter code: dTDP-4-dehydrorhamnose reductase (301 aa).

NADH is bound by residues 10 to 12, D30, 39 to 40, and 63 to 65; these read GQV, DF, and AHT. Residue 11 to 12 coordinates NADPH; sequence QV. NADPH contacts are provided by residues 39 to 40, 63 to 65, and Y102; these read DF and AHT. 104–105 contributes to the dTDP-beta-L-rhamnose binding site; that stretch reads TD. Residues Y129 and K133 each coordinate NADH. NADPH-binding residues include Y129 and K133. Y129 (proton donor/acceptor) is an active-site residue. Residue W155 participates in dTDP-beta-L-rhamnose binding.

This sequence belongs to the dTDP-4-dehydrorhamnose reductase family. Homodimer. Mg(2+) serves as cofactor.

It carries out the reaction dTDP-beta-L-rhamnose + NADP(+) = dTDP-4-dehydro-beta-L-rhamnose + NADPH + H(+). Its pathway is carbohydrate biosynthesis; dTDP-L-rhamnose biosynthesis. It functions in the pathway bacterial outer membrane biogenesis; LPS O-antigen biosynthesis. Its function is as follows. Involved in the biosynthesis of the dTDP-L-rhamnose which is an important component of lipopolysaccharide (LPS). Catalyzes the reduction of dTDP-6-deoxy-L-lyxo-4-hexulose to yield dTDP-L-rhamnose. RmlD uses NADH and NADPH nearly equally well. The sequence is that of dTDP-4-dehydrorhamnose reductase from Escherichia coli.